The chain runs to 475 residues: ATP synthase subunit beta (475 aa).

154 to 161 (GGAGVGKT) is a binding site for ATP.

This sequence belongs to the ATPase alpha/beta chains family. In terms of assembly, F-type ATPases have 2 components, CF(1) - the catalytic core - and CF(0) - the membrane proton channel. CF(1) has five subunits: alpha(3), beta(3), gamma(1), delta(1), epsilon(1). CF(0) has three main subunits: a(1), b(2) and c(9-12). The alpha and beta chains form an alternating ring which encloses part of the gamma chain. CF(1) is attached to CF(0) by a central stalk formed by the gamma and epsilon chains, while a peripheral stalk is formed by the delta and b chains.

It is found in the cell inner membrane. The catalysed reaction is ATP + H2O + 4 H(+)(in) = ADP + phosphate + 5 H(+)(out). Its function is as follows. Produces ATP from ADP in the presence of a proton gradient across the membrane. The catalytic sites are hosted primarily by the beta subunits. The polypeptide is ATP synthase subunit beta (Hyphomonas neptunium (strain ATCC 15444)).